We begin with the raw amino-acid sequence, 225 residues long: 7-cyano-7-deazaguanine synthase (225 aa).

10 to 20 (VSGGLDSTTVI) is an ATP binding site. Residues Cys-189, Cys-199, Cys-202, and Cys-205 each contribute to the Zn(2+) site.

Belongs to the QueC family. The cofactor is Zn(2+).

It carries out the reaction 7-carboxy-7-deazaguanine + NH4(+) + ATP = 7-cyano-7-deazaguanine + ADP + phosphate + H2O + H(+). The protein operates within purine metabolism; 7-cyano-7-deazaguanine biosynthesis. In terms of biological role, catalyzes the ATP-dependent conversion of 7-carboxy-7-deazaguanine (CDG) to 7-cyano-7-deazaguanine (preQ(0)). The protein is 7-cyano-7-deazaguanine synthase of Cellvibrio japonicus (strain Ueda107) (Pseudomonas fluorescens subsp. cellulosa).